We begin with the raw amino-acid sequence, 705 residues long: Elongation factor G 2 (705 aa).

A tr-type G domain is found at 8–290 (ELYRNIGISA…AVLDYLPSPL (283 aa)). GTP-binding positions include 17 to 24 (AHIDAGKT), 88 to 92 (DTPGH), and 142 to 145 (NKMD).

The protein belongs to the TRAFAC class translation factor GTPase superfamily. Classic translation factor GTPase family. EF-G/EF-2 subfamily.

It localises to the cytoplasm. Functionally, catalyzes the GTP-dependent ribosomal translocation step during translation elongation. During this step, the ribosome changes from the pre-translocational (PRE) to the post-translocational (POST) state as the newly formed A-site-bound peptidyl-tRNA and P-site-bound deacylated tRNA move to the P and E sites, respectively. Catalyzes the coordinated movement of the two tRNA molecules, the mRNA and conformational changes in the ribosome. The chain is Elongation factor G 2 from Bordetella avium (strain 197N).